Consider the following 200-residue polypeptide: MARGNPRKRAAAAKDKWKMKEWYIVYAPDFFGSKEIGLTPADDPEKVIGRVIETTLKDLTGDFTKGHVKLYFQVYDVKGQNAYTKFKGHTLARSYIRSLVRRRTTRVDGIFNITTKDGYKLRVMGMVIAYRRIQTSQERAIRKIIQDIIYKKAEELNFADFVLQSVNGQIASEIAKEARKIYPIKRAEVRKIKVLAEPSA.

This sequence belongs to the eukaryotic ribosomal protein eS1 family. Part of the 30S ribosomal subunit.

This is Small ribosomal subunit protein eS1 from Thermococcus kodakarensis (strain ATCC BAA-918 / JCM 12380 / KOD1) (Pyrococcus kodakaraensis (strain KOD1)).